A 386-amino-acid polypeptide reads, in one-letter code: Prostacyclin receptor (386 aa).

Topologically, residues 1-16 (MADSCRNLTYVRGSVG) are extracellular. 2 disulfides stabilise this stretch: Cys-5–Cys-165 and Cys-92–Cys-170. N-linked (GlcNAc...) asparagine glycosylation is present at Asn-7. A helical membrane pass occupies residues 17-38 (PATSTLMFVAGVVGNGLALGIL). Over 39–51 (SARRPARPSAFAV) the chain is Cytoplasmic. A helical membrane pass occupies residues 52-76 (LVTGLAATDLLGTSFLSPAVFVAYA). Residues 77 to 94 (RNSSLLGLARGGPALCDA) lie on the Extracellular side of the membrane. The helical transmembrane segment at 95-115 (FAFAMTFFGLASMLILFAMAV) threads the bilayer. Residues 116 to 134 (ERCLALSHPYLYAQLDGPR) are Cytoplasmic-facing. The chain crosses the membrane as a helical span at residues 135-158 (CARLALPAIYAFCVLFCALPLLGL). Residues 159-181 (GQHQQYCPGSWCFLRMRWAQPGG) are Extracellular-facing. The chain crosses the membrane as a helical span at residues 182–208 (AAFSLAYAGLVALLVAAIFLCNGSVTL). The Cytoplasmic segment spans residues 209–235 (SLCRMYRQQKRHQGSLGPRPRTGEDEV). Residues 236–260 (DHLILLALMTVVMAVCSLPLTIRCF) form a helical membrane-spanning segment. Residues 261-274 (TQAVAPDSSSEMGD) lie on the Extracellular side of the membrane. A helical transmembrane segment spans residues 275–295 (LLAFRFYAFNPILDPWVFILF). Residues 296–386 (RKAVFQRLKL…AEASVACSLC (91 aa)) lie on the Cytoplasmic side of the membrane. Positions 322-376 (PLSQLASGRRDPRAPSAPVGKEGSCVPLSAWGEGQVEPLPPTQQSSGSAVGTSSK) are disordered. Polar residues predominate over residues 363–376 (TQQSSGSAVGTSSK). A Cysteine methyl ester modification is found at Cys-383. The S-farnesyl cysteine moiety is linked to residue Cys-383. A propeptide spans 384-386 (SLC) (removed in mature form).

It belongs to the G-protein coupled receptor 1 family. As to quaternary structure, interacts (non-isoprenylated C-terminus) with PDZK1. Post-translationally, isoprenylation does not influence ligand binding but is required for efficient coupling to the effectors adenylyl cyclase and phospholipase C.

It localises to the cell membrane. In terms of biological role, receptor for prostacyclin (prostaglandin I2 or PGI2). The activity of this receptor is mediated by G(s) proteins which activate adenylate cyclase. The sequence is that of Prostacyclin receptor (PTGIR) from Homo sapiens (Human).